The chain runs to 129 residues: Large ribosomal subunit protein bL12c (129 aa).

Belongs to the bacterial ribosomal protein bL12 family. As to quaternary structure, homodimer. Part of the ribosomal stalk of the 50S ribosomal subunit. Forms a multimeric L10(L12)X complex, where L10 forms an elongated spine to which 2 to 4 L12 dimers bind in a sequential fashion. Binds GTP-bound translation factors.

It localises to the plastid. The protein resides in the chloroplast. In terms of biological role, forms part of the ribosomal stalk which helps the ribosome interact with GTP-bound translation factors. Is thus essential for accurate translation. In Oltmannsiellopsis viridis (Marine flagellate), this protein is Large ribosomal subunit protein bL12c.